The following is a 1463-amino-acid chain: Probable ATP-dependent RNA helicase spindle-E (1463 aa).

The Helicase ATP-binding domain maps to 131–296; sequence LKAIRENPVV…FKIPGPNSLF (166 aa). 144 to 151 contacts ATP; the sequence is GMTGCGKT. The DEAH box motif lies at 243–246; the sequence is DEVH. Positions 348 to 531 constitute a Helicase C-terminal domain; it reads VCDRFIDEFE…NVVLKTKLLD (184 aa). In terms of domain architecture, Tudor spans 951–1016; sequence AFKQRDIVAA…QLRGTPLDMF (66 aa).

It belongs to the DEAD box helicase family. DEAH subfamily.

It is found in the cytoplasm. The enzyme catalyses ATP + H2O = ADP + phosphate + H(+). Its function is as follows. Probable ATP-binding RNA helicase which plays a central role during gametogenesis by repressing transposable elements and preventing their mobilization, which is essential for the germline integrity. Acts via the piRNA metabolic process, which mediates the repression of transposable elements during meiosis by forming complexes composed of piRNAs and Piwi proteins and govern the methylation and subsequent repression of transposons. The protein is Probable ATP-dependent RNA helicase spindle-E (spn-E) of Anopheles gambiae (African malaria mosquito).